The sequence spans 366 residues: Glutamate 5-kinase (366 aa).

Lys-17 is an ATP binding site. Residues Ser-57, Asp-144, and Asn-156 each coordinate substrate. Residues 176 to 177 (SD) and 216 to 222 (TGGMASK) contribute to the ATP site. The PUA domain occupies 278 to 352 (QGILHIDEGA…GKSTQELPAE (75 aa)).

It belongs to the glutamate 5-kinase family.

It localises to the cytoplasm. The enzyme catalyses L-glutamate + ATP = L-glutamyl 5-phosphate + ADP. It functions in the pathway amino-acid biosynthesis; L-proline biosynthesis; L-glutamate 5-semialdehyde from L-glutamate: step 1/2. Catalyzes the transfer of a phosphate group to glutamate to form L-glutamate 5-phosphate. In Rhodococcus opacus (strain B4), this protein is Glutamate 5-kinase.